The following is a 430-amino-acid chain: Tol-Pal system protein TolB (430 aa).

The N-terminal stretch at 1-21 (MKQAFRVALGFLVLWASVLHA) is a signal peptide.

Belongs to the TolB family. In terms of assembly, the Tol-Pal system is composed of five core proteins: the inner membrane proteins TolA, TolQ and TolR, the periplasmic protein TolB and the outer membrane protein Pal. They form a network linking the inner and outer membranes and the peptidoglycan layer.

It localises to the periplasm. Part of the Tol-Pal system, which plays a role in outer membrane invagination during cell division and is important for maintaining outer membrane integrity. TolB occupies a key intermediary position in the Tol-Pal system because it communicates directly with both membrane-embedded components, Pal in the outer membrane and TolA in the inner membrane. In Yersinia pestis, this protein is Tol-Pal system protein TolB.